Consider the following 107-residue polypeptide: HTH-type transcriptional regulator Rv2034 (107 aa).

An HTH arsR-type domain is found at 1 to 93; it reads MSTYRSPDRA…DLDRFWTRAL (93 aa). The segment at residues 33–56 is a DNA-binding region (H-T-H motif); that stretch reads VGELARDLPVSRPAVSQHLKVLKT.

Homodimer.

With respect to regulation, DNA-binding ability is not susceptible to zinc, nickel, cobalt, cadmium, lead, copper and manganese ions. In terms of biological role, involved in the regulation of lipid metabolism and hypoxic response. Positively regulates transcription of various genes, such as phoP, groEL2 and dosR. Negatively regulates its own transcription. Acts by binding to a specific palindromic sequence motif in promoter regions. This Mycobacterium tuberculosis (strain ATCC 25618 / H37Rv) protein is HTH-type transcriptional regulator Rv2034.